Reading from the N-terminus, the 862-residue chain is Kinesin-like protein KIN-7E (862 aa).

In terms of domain architecture, Kinesin motor spans 24-346 (KILVLVRLRP…LLFACCAKEV (323 aa)). Position 110-117 (110-117 (GQTSSGKT)) interacts with ATP. Positions 355 to 428 (VMSDKALVKQ…RLEDFMKMVE (74 aa)) form a coiled coil. Disordered regions lie at residues 463–505 (RTSF…QSEE) and 542–632 (ANGE…TPLV). Residues 465–476 (SFISDGTSTPLS) show a composition bias toward polar residues. Positions 494–505 (MSPRHSGDQSEE) are enriched in basic and acidic residues. A compositionally biased stretch (polar residues) spans 612–621 (DSMTSRGSDS). Residue lysine 734 forms a Glycyl lysine isopeptide (Lys-Gly) (interchain with G-Cter in ubiquitin) linkage.

Belongs to the TRAFAC class myosin-kinesin ATPase superfamily. Kinesin family. KIN-7 subfamily.

This Arabidopsis thaliana (Mouse-ear cress) protein is Kinesin-like protein KIN-7E.